A 573-amino-acid chain; its full sequence is ATP-dependent RNA helicase RhlB (573 aa).

Positions 9–37 (LTFSSFDLHPALVAGLESAGFTRCTPIQA) match the Q motif motif. The Helicase ATP-binding domain occupies 40-220 (LPVALPGGDV…YEHMNEPEKL (181 aa)). Position 53-60 (53-60 (AQTGTGKT)) interacts with ATP. The DEAD box motif lies at 166-169 (DEAD). The Helicase C-terminal domain maps to 231–393 (RVRQRIYFPS…PVTTELLTPL (163 aa)). Over residues 391–400 (TPLPRTPRAT) the composition is skewed to low complexity. Residues 391–559 (TPLPRTPRAT…AKPSGSPSLL (169 aa)) form a disordered region. Residues 402-411 (EGEEVDDDAG) are compositionally biased toward acidic residues. The span at 419-432 (REAREQRAADEARR) shows a compositional bias: basic and acidic residues. Gly residues predominate over residues 435 to 449 (GRSGPGGASRSGSGG). Basic and acidic residues predominate over residues 450 to 461 (GRRDGAGADGKP). Positions 476-499 (PAAAPSETPVVVAAAAETPAVTAA) are enriched in low complexity. Residues 505 to 514 (PRKRRRRRNG) show a composition bias toward basic residues. 2 stretches are compositionally biased toward low complexity: residues 516–528 (PVEGAEPVVASTP) and 541–559 (VVAKPVRAAAKPSGSPSLL).

It belongs to the DEAD box helicase family. RhlB subfamily. In terms of assembly, component of the RNA degradosome, which is a multiprotein complex involved in RNA processing and mRNA degradation.

It is found in the cytoplasm. It carries out the reaction ATP + H2O = ADP + phosphate + H(+). Its function is as follows. DEAD-box RNA helicase involved in RNA degradation. Has RNA-dependent ATPase activity and unwinds double-stranded RNA. The sequence is that of ATP-dependent RNA helicase RhlB from Xanthomonas campestris pv. campestris (strain B100).